The primary structure comprises 1168 residues: Probable serine/threonine protein kinase IRE (1168 aa).

Disordered stretches follow at residues 1–165 (MSTT…GVES) and 377–444 (EKQN…KIQP). Low complexity predominate over residues 16–25 (PTTISTPTST). Basic and acidic residues-rich tracts occupy residues 39–54 (RHSD…KTDE) and 107–130 (QDDK…DARA). Polar residues-rich tracts occupy residues 146-163 (QWSQ…NPGV) and 401-414 (TARS…NFRM). The C2H2-type; atypical zinc-finger motif lies at 488-507 (CRICEVEIPVVHVEEHSRIC). Disordered stretches follow at residues 546–566 (PRAV…DLDE), 602–622 (GTKD…PRNS), and 717–744 (SSNA…LNPR). Residues 754 to 1043 (FEIIKPISRG…AGEVKQHHFF (290 aa)) enclose the Protein kinase domain. ATP contacts are provided by residues 760–768 (ISRGAFGRV) and lysine 783. Residue aspartate 877 is the Proton acceptor of the active site. The region spanning 1044-1144 (KDINWDTLAR…KNLSQLASIN (101 aa)) is the AGC-kinase C-terminal domain.

Belongs to the protein kinase superfamily. AGC Ser/Thr protein kinase family. In terms of tissue distribution, highly expressed in roots, elongating root hair cells and pollen grains.

The catalysed reaction is L-seryl-[protein] + ATP = O-phospho-L-seryl-[protein] + ADP + H(+). The enzyme catalyses L-threonyl-[protein] + ATP = O-phospho-L-threonyl-[protein] + ADP + H(+). Its function is as follows. Modulates root tip growth. May play a common role in the tip growth of plant cells. The sequence is that of Probable serine/threonine protein kinase IRE from Arabidopsis thaliana (Mouse-ear cress).